Here is a 145-residue protein sequence, read N- to C-terminus: Large-conductance mechanosensitive channel (145 aa).

3 helical membrane passes run F10–A30, I41–I61, and G87–V107.

The protein belongs to the MscL family. As to quaternary structure, homopentamer.

The protein localises to the cell inner membrane. Its function is as follows. Channel that opens in response to stretch forces in the membrane lipid bilayer. May participate in the regulation of osmotic pressure changes within the cell. The chain is Large-conductance mechanosensitive channel from Psychrobacter arcticus (strain DSM 17307 / VKM B-2377 / 273-4).